The following is a 162-amino-acid chain: Caveolin-2 (162 aa).

Residues 1-86 (MGLETEKADV…FEISKYVIYK (86 aa)) are Cytoplasmic-facing. Position 19 is a phosphotyrosine; by SRC (Tyr-19). Phosphoserine is present on residues Ser-20 and Ser-23. At Tyr-27 the chain carries Phosphotyrosine; by SRC. Ser-36 carries the phosphoserine modification. Positions 87–107 (FLTVFLAIPLAFTAGILFATL) form an intramembrane region, helical. Residues 108-162 (SCLHIWIIMPFVKTCLMVLPSVQTIWRSVTDVIIAPLCTSIGRICSSVSLQVSHD) lie on the Cytoplasmic side of the membrane.

It belongs to the caveolin family. As to quaternary structure, monomer or homodimer. Interacts with CAV1; the interaction forms a stable heterooligomeric complex that is required for targeting to lipid rafts and for caveolae formation. Tyrosine phosphorylated forms do not form heterooligomers with the Tyr-19-phosphorylated form existing as a monomer or dimer, and the Tyr-27-form as a monomer only. Interacts (tyrosine phosphorylated form) with the SH2 domain-containing proteins, RASA1, NCK1 and SRC. Interacts (tyrosine phosphorylated form) with INSR, the interaction (Tyr-27-phosphorylated form) is increased on insulin stimulation. Interacts (Tyr-19 phosphorylated form) with MAPK1 (phosphorylated form); the interaction, promoted by insulin, leads to nuclear location and MAPK1 activation. Interacts with STAT3; the interaction is increased on insulin-induced tyrosine phosphorylation leading to STAT activation. Post-translationally, phosphorylated on serine and tyrosine residues. CAV1 promotes phosphorylation on Ser-23 which then targets the complex to the plasma membrane, lipid rafts and caveolae. Phosphorylation on Ser-36 appears to modulate mitosis in endothelial cells. Phosphorylation on both Tyr-19 and Tyr-27 is required for insulin-induced 'Ser-727' phosphorylation of STAT3 and its activation. Phosphorylation on Tyr-19 is required for insulin-induced phosphorylation of MAPK1 and DNA binding of STAT3. Tyrosine phosphorylation is induced by both EGF and insulin (By. similarity).

The protein resides in the nucleus. It is found in the cytoplasm. It localises to the golgi apparatus membrane. Its subcellular location is the cell membrane. The protein localises to the membrane. The protein resides in the caveola. May act as a scaffolding protein within caveolar membranes. Interacts directly with G-protein alpha subunits and can functionally regulate their activity. Acts as an accessory protein in conjunction with CAV1 in targeting to lipid rafts and driving caveolae formation. The Ser-36 phosphorylated form has a role in modulating mitosis in endothelial cells. Positive regulator of cellular mitogenesis of the MAPK signaling pathway. Required for the insulin-stimulated nuclear translocation and activation of MAPK1 and STAT3, and the subsequent regulation of cell cycle progression. This Atelerix albiventris (Middle-African hedgehog) protein is Caveolin-2 (CAV2).